An 815-amino-acid polypeptide reads, in one-letter code: Calpain-3 (815 aa).

The interval 7–36 is disordered; the sequence is ASVAPRTAAEPRSPGPVPHPAQSKATEAGG. One can recognise a Calpain catalytic domain in the interval 74–417; sequence LYVDPEFPPD…FTKLEICNLT (344 aa). Catalysis depends on residues cysteine 129, histidine 334, and asparagine 358. The interval 418 to 586 is domain III; sequence ADALQSDKLQ…KRNLSEEVEN (169 aa). Positions 587 to 649 are linker; sequence TISVDRPVPI…QESEEQQQFR (63 aa). Positions 605–646 are disordered; the sequence is SNKELGVDQESEEGKGKTSPDKQEQSPQPQPGSSDQESEEQQ. Residues 616 to 628 are compositionally biased toward basic and acidic residues; sequence EEGKGKTSPDKQE. Low complexity predominate over residues 629–639; it reads QSPQPQPGSSD. 4 EF-hand domains span residues 643 to 677, 686 to 719, 716 to 751, and 781 to 815; these read EEQQ…VVNK, FTLE…NKIK, NKIK…AGFH, and VRLE…TMYA. The domain IV stretch occupies residues 650 to 815; sequence NIFKQIAGDD…LEWLQLTMYA (166 aa). Positions 656, 659, 661, 666, 699, 701, 703, 705, 710, 729, 731, 733, 735, 740, 794, 796, 798, and 800 each coordinate Ca(2+).

It belongs to the peptidase C2 family. As to quaternary structure, homodimer; via EF-hand domain 4. Interacts with TTN/titin. Interacts with CMYA5; this interaction, which results in CMYA5 proteolysis, may protect CAPN3 from autolysis. Interacts with SIMC1. Interacts with UTP25; the interaction is required for CAPN3 translocation to the nucleolus.

It is found in the cytoplasm. It localises to the nucleus. The protein localises to the nucleolus. It catalyses the reaction Broad endopeptidase activity.. Its activity is regulated as follows. Activated by micromolar concentrations of calcium and inhibited by calpastatin. Functionally, calcium-regulated non-lysosomal thiol-protease. Proteolytically cleaves CTBP1. Mediates, with UTP25, the proteasome-independent degradation of p53/TP53. This chain is Calpain-3 (CAPN3), found in Macaca fascicularis (Crab-eating macaque).